The primary structure comprises 100 residues: Osteocalcin (100 aa).

The N-terminal stretch at 1-23 is a signal peptide; the sequence is MRALTLLALLALAALCITGQAGA. Positions 24–51 are excised as a propeptide; the sequence is KPSGADSSKGAAFVSKQEGSEVVKRPRR. Positions 52 to 98 constitute a Gla domain; that stretch reads YLYQWLGAPVPYPDPLEPKREVCELNPDCDELADHIGFQEAYRRFYG. Residues Glu68, Glu72, Glu75, and Asp81 each coordinate Ca(2+). A 4-carboxyglutamate mark is found at Glu68, Glu72, and Glu75. Residues Cys74 and Cys80 are joined by a disulfide bond.

It belongs to the osteocalcin/matrix Gla protein family. Gamma-carboxyglutamate residues are formed by vitamin K dependent carboxylation by GGCX. These residues are essential for the binding of calcium. Decarboxylation promotes the hormone activity.

Its subcellular location is the secreted. The carboxylated form is one of the main organic components of the bone matrix, which constitutes 1-2% of the total bone protein: it acts as a negative regulator of bone formation and is required to limit bone formation without impairing bone resorption or mineralization. The carboxylated form binds strongly to apatite and calcium. Functionally, the uncarboxylated form acts as a hormone secreted by osteoblasts, which regulates different cellular processes, such as energy metabolism, male fertility and brain development. Regulates of energy metabolism by acting as a hormone favoring pancreatic beta-cell proliferation, insulin secretion and sensitivity and energy expenditure. Uncarboxylated osteocalcin hormone also promotes testosterone production in the testes: acts as a ligand for G protein-coupled receptor GPRC6A at the surface of Leydig cells, initiating a signaling response that promotes the expression of enzymes required for testosterone synthesis in a CREB-dependent manner. Also acts as a regulator of brain development: osteocalcin hormone crosses the blood-brain barrier and acts as a ligand for GPR158 on neurons, initiating a signaling response that prevents neuronal apoptosis in the hippocampus, favors the synthesis of all monoamine neurotransmitters and inhibits that of gamma-aminobutyric acid (GABA). Osteocalcin also crosses the placenta during pregnancy and maternal osteocalcin is required for fetal brain development. The sequence is that of Osteocalcin from Pongo pygmaeus (Bornean orangutan).